Here is a 614-residue protein sequence, read N- to C-terminus: DNA mismatch repair protein MutL (614 aa).

The protein belongs to the DNA mismatch repair MutL/HexB family.

In terms of biological role, this protein is involved in the repair of mismatches in DNA. It is required for dam-dependent methyl-directed DNA mismatch repair. May act as a 'molecular matchmaker', a protein that promotes the formation of a stable complex between two or more DNA-binding proteins in an ATP-dependent manner without itself being part of a final effector complex. This chain is DNA mismatch repair protein MutL, found in Thermoanaerobacter sp. (strain X514).